The chain runs to 129 residues: Small ribosomal subunit protein uS11 (129 aa).

Belongs to the universal ribosomal protein uS11 family. As to quaternary structure, part of the 30S ribosomal subunit. Interacts with proteins S7 and S18. Binds to IF-3.

In terms of biological role, located on the platform of the 30S subunit, it bridges several disparate RNA helices of the 16S rRNA. Forms part of the Shine-Dalgarno cleft in the 70S ribosome. The chain is Small ribosomal subunit protein uS11 from Carboxydothermus hydrogenoformans (strain ATCC BAA-161 / DSM 6008 / Z-2901).